We begin with the raw amino-acid sequence, 250 residues long: U6 snRNA phosphodiesterase 1 (250 aa).

Positions 1 to 31 (MALVSYSSSEEDEGETSEPPGRRLPPLPPPT) are disordered. Residues 22 to 31 (RRLPPLPPPT) are compositionally biased toward pro residues. The Proton acceptor role is filled by H105. 105-107 (HIS) is a binding site for AMP. UMP-binding positions include Q149, Y187, and 191–195 (SFHVS). Residues Y187 and 189 to 195 (EPSFHVS) each bind AMP. Residue H193 is the Proton donor of the active site.

This sequence belongs to the 2H phosphoesterase superfamily. USB1 family.

It is found in the nucleus. It carries out the reaction a 3'-end uridylyl-uridine-RNA = a 3'-end 2',3'-cyclophospho-uridine-RNA + uridine. It catalyses the reaction a 3'-end uridylyl-adenosine-RNA = a 3'-end 2',3'-cyclophospho-uridine-RNA + adenosine. Functionally, 3'-5' RNA exonuclease that trims the 3' end of oligo(U) and oligo(A) tracts of the pre-U6 small nuclear RNA (snRNA) molecule, leading to the formation of a mature U6 snRNA 3' end-terminated with a 2',3'-cyclic phosphate. Participates in the U6 snRNA 3' end processing that prevents U6 snRNA degradation. In addition also removes uridines from the 3' end of U6atac snRNA and possibly the vault RNA VTRNA1-1. The protein is U6 snRNA phosphodiesterase 1 of Xenopus laevis (African clawed frog).